The chain runs to 218 residues: Kynurenine formamidase (218 aa).

W27 lines the substrate pocket. Zn(2+) contacts are provided by H57, H61, and D63. H67 serves as the catalytic Proton donor/acceptor. 2 residues coordinate Zn(2+): H169 and E181.

The protein belongs to the Cyclase 1 superfamily. KynB family. In terms of assembly, homodimer. It depends on Zn(2+) as a cofactor.

It carries out the reaction N-formyl-L-kynurenine + H2O = L-kynurenine + formate + H(+). The protein operates within amino-acid degradation; L-tryptophan degradation via kynurenine pathway; L-kynurenine from L-tryptophan: step 2/2. With respect to regulation, inhibited by EDTA. Insensitive to phenylmethylsulfonyl fluoride (PMSF). In terms of biological role, catalyzes the hydrolysis of N-formyl-L-kynurenine to L-kynurenine, the second step in the kynurenine pathway of tryptophan degradation. The chain is Kynurenine formamidase from Cupriavidus metallidurans (strain ATCC 43123 / DSM 2839 / NBRC 102507 / CH34) (Ralstonia metallidurans).